A 370-amino-acid polypeptide reads, in one-letter code: Histidinol-phosphate aminotransferase (370 aa).

N6-(pyridoxal phosphate)lysine is present on Lys-222.

The protein belongs to the class-II pyridoxal-phosphate-dependent aminotransferase family. Histidinol-phosphate aminotransferase subfamily. Homodimer. Pyridoxal 5'-phosphate is required as a cofactor.

The catalysed reaction is L-histidinol phosphate + 2-oxoglutarate = 3-(imidazol-4-yl)-2-oxopropyl phosphate + L-glutamate. Its pathway is amino-acid biosynthesis; L-histidine biosynthesis; L-histidine from 5-phospho-alpha-D-ribose 1-diphosphate: step 7/9. This is Histidinol-phosphate aminotransferase from Bacillus cytotoxicus (strain DSM 22905 / CIP 110041 / 391-98 / NVH 391-98).